A 400-amino-acid chain; its full sequence is Phosphoglycerate kinase (400 aa).

Substrate is bound by residues 23–25, R38, 61–64, R120, and R153; these read DLN and HFGR. ATP-binding positions include K203, E325, and 355–358; that span reads GGDT.

Belongs to the phosphoglycerate kinase family. Monomer.

The protein resides in the cytoplasm. The catalysed reaction is (2R)-3-phosphoglycerate + ATP = (2R)-3-phospho-glyceroyl phosphate + ADP. The protein operates within carbohydrate degradation; glycolysis; pyruvate from D-glyceraldehyde 3-phosphate: step 2/5. This Methylobacterium radiotolerans (strain ATCC 27329 / DSM 1819 / JCM 2831 / NBRC 15690 / NCIMB 10815 / 0-1) protein is Phosphoglycerate kinase.